Consider the following 283-residue polypeptide: MASYLKLKAQEETWLQRHSRLILAILAGLGSLLTAYLTYTKLTEQPAAFCTGDGGCDLVLSSRWAEFLGIPTAAVGLLGFLGVLALAVLPDGLPLVKRWRWPALFGLVSAMTAFEMYMLYLMVAVLRQFCMYCTTAIILVAGLGLVTVLGHRWLDGGKLAFSYILVAFLTLVTTIGVYANQVPPPSPLAVGLAAHLRQIGGTMYGAYWCPHCQDQKELFGAAFDQVPYVECSPNGPGTPQAQECTEAGITSYPTWIINGRTYTGVRSLEALAVASGYPLEEGR.

Topologically, residues 1 to 20 (MASYLKLKAQEETWLQRHSR) are cytoplasmic. A helical membrane pass occupies residues 21 to 41 (LILAILAGLGSLLTAYLTYTK). The Periplasmic portion of the chain corresponds to 42 to 66 (LTEQPAAFCTGDGGCDLVLSSRWAE). The cysteines at positions 50 and 56 are disulfide-linked. 59 to 65 (VLSSRWA) is a binding site for a quinone. Residues 67–87 (FLGIPTAAVGLLGFLGVLALA) form a helical membrane-spanning segment. At 88–102 (VLPDGLPLVKRWRWP) the chain is on the cytoplasmic side. Residues 103–123 (ALFGLVSAMTAFEMYMLYLMV) traverse the membrane as a helical segment. Residue 111 to 122 (MTAFEMYMLYLM) coordinates a quinone. The Periplasmic segment spans residues 124–128 (AVLRQ). The chain crosses the membrane as a helical span at residues 129 to 149 (FCMYCTTAIILVAGLGLVTVL). Cysteines 130 and 133 form a disulfide. At 150–158 (GHRWLDGGK) the chain is on the cytoplasmic side. The helical transmembrane segment at 159–179 (LAFSYILVAFLTLVTTIGVYA) threads the bilayer. Residues 180-283 (NQVPPPSPLA…ASGYPLEEGR (104 aa)) lie on the Periplasmic side of the membrane. Residues 186–283 (SPLAVGLAAH…ASGYPLEEGR (98 aa)) form a thioredoxin-like domain region. Intrachain disulfides connect cysteine 209–cysteine 212 and cysteine 231–cysteine 244.

The protein belongs to the VKOR family.

It is found in the membrane. Its activity is regulated as follows. Inhibited by ferulenol. In terms of biological role, thiol-disulfide oxidoreductase that catalyzes vitamin K-dependent disulfide bond formation in periplasmic target proteins. The polypeptide is Vitamin K epoxide reductase homolog (Synechococcus sp. (strain JA-2-3B'a(2-13)) (Cyanobacteria bacterium Yellowstone B-Prime)).